The following is a 639-amino-acid chain: Serine protease HtrA-like (639 aa).

Basic and acidic residues-rich tracts occupy residues 1–13 (MDND…PREQ), 21–75 (YFHN…EIHQ), 106–187 (QQLK…KESS), and 195–205 (KSQKIEQKEQK). A disordered region spans residues 1 to 262 (MDNDKKHVIP…LENEPKNNDT (262 aa)). The span at 206–219 (ASSNETSNKELNSY) shows a compositional bias: polar residues. Composition is skewed to basic and acidic residues over residues 220–235 (TKDK…DLKK) and 245–262 (NKLE…NNDT). The chain crosses the membrane as a helical span at residues 277–297 (IVIVVAIILIVILISAIISTM). Active-site charge relay system residues include H374, D404, and S489. A PDZ domain is found at 527 to 629 (EIAEELEKKG…TLSAKIYREG (103 aa)).

The protein belongs to the peptidase S1C family.

It is found in the cell membrane. The protein is Serine protease HtrA-like of Staphylococcus haemolyticus (strain JCSC1435).